The following is a 198-amino-acid chain: UDP-N-acetylglucosamine transferase subunit ALG13 (198 aa).

The protein belongs to the glycosyltransferase 28 family. Heterodimer with ALG14 to form a functional enzyme.

Its subcellular location is the endoplasmic reticulum. The enzyme catalyses an N-acetyl-alpha-D-glucosaminyl-diphospho-di-trans,poly-cis-dolichol + UDP-N-acetyl-alpha-D-glucosamine = an N,N'-diacetylchitobiosyl-diphospho-di-trans,poly-cis-dolichol + UDP + H(+). Its function is as follows. Involved in protein N-glycosylation. Essential for the second step of the dolichol-linked oligosaccharide pathway. This is UDP-N-acetylglucosamine transferase subunit ALG13 (ALG13) from Candida glabrata (strain ATCC 2001 / BCRC 20586 / JCM 3761 / NBRC 0622 / NRRL Y-65 / CBS 138) (Yeast).